A 475-amino-acid chain; its full sequence is Aspartyl/glutamyl-tRNA(Asn/Gln) amidotransferase subunit B (475 aa).

It belongs to the GatB/GatE family. GatB subfamily. Heterotrimer of A, B and C subunits.

The enzyme catalyses L-glutamyl-tRNA(Gln) + L-glutamine + ATP + H2O = L-glutaminyl-tRNA(Gln) + L-glutamate + ADP + phosphate + H(+). It catalyses the reaction L-aspartyl-tRNA(Asn) + L-glutamine + ATP + H2O = L-asparaginyl-tRNA(Asn) + L-glutamate + ADP + phosphate + 2 H(+). Allows the formation of correctly charged Asn-tRNA(Asn) or Gln-tRNA(Gln) through the transamidation of misacylated Asp-tRNA(Asn) or Glu-tRNA(Gln) in organisms which lack either or both of asparaginyl-tRNA or glutaminyl-tRNA synthetases. The reaction takes place in the presence of glutamine and ATP through an activated phospho-Asp-tRNA(Asn) or phospho-Glu-tRNA(Gln). This chain is Aspartyl/glutamyl-tRNA(Asn/Gln) amidotransferase subunit B, found in Pelodictyon phaeoclathratiforme (strain DSM 5477 / BU-1).